The following is a 415-amino-acid chain: Gamma-glutamyl phosphate reductase 1 (415 aa).

The protein belongs to the gamma-glutamyl phosphate reductase family.

It is found in the cytoplasm. It catalyses the reaction L-glutamate 5-semialdehyde + phosphate + NADP(+) = L-glutamyl 5-phosphate + NADPH + H(+). It participates in amino-acid biosynthesis; L-proline biosynthesis; L-glutamate 5-semialdehyde from L-glutamate: step 2/2. Functionally, catalyzes the NADPH-dependent reduction of L-glutamate 5-phosphate into L-glutamate 5-semialdehyde and phosphate. The product spontaneously undergoes cyclization to form 1-pyrroline-5-carboxylate. The sequence is that of Gamma-glutamyl phosphate reductase 1 from Bacillus licheniformis (strain ATCC 14580 / DSM 13 / JCM 2505 / CCUG 7422 / NBRC 12200 / NCIMB 9375 / NCTC 10341 / NRRL NRS-1264 / Gibson 46).